We begin with the raw amino-acid sequence, 252 residues long: Endonuclease NucS (252 aa).

This sequence belongs to the NucS endonuclease family.

Its subcellular location is the cytoplasm. Its function is as follows. Cleaves both 3' and 5' ssDNA extremities of branched DNA structures. This chain is Endonuclease NucS, found in Thermococcus kodakarensis (strain ATCC BAA-918 / JCM 12380 / KOD1) (Pyrococcus kodakaraensis (strain KOD1)).